The following is a 335-amino-acid chain: Tetraacyldisaccharide 4'-kinase (335 aa).

59 to 66 lines the ATP pocket; sequence TAGGNGKT.

The protein belongs to the LpxK family.

It carries out the reaction a lipid A disaccharide + ATP = a lipid IVA + ADP + H(+). It functions in the pathway glycolipid biosynthesis; lipid IV(A) biosynthesis; lipid IV(A) from (3R)-3-hydroxytetradecanoyl-[acyl-carrier-protein] and UDP-N-acetyl-alpha-D-glucosamine: step 6/6. Transfers the gamma-phosphate of ATP to the 4'-position of a tetraacyldisaccharide 1-phosphate intermediate (termed DS-1-P) to form tetraacyldisaccharide 1,4'-bis-phosphate (lipid IVA). The chain is Tetraacyldisaccharide 4'-kinase from Vibrio vulnificus (strain YJ016).